Reading from the N-terminus, the 297-residue chain is 2-dehydropantoate 2-reductase (297 aa).

Residues 11-16, asparagine 107, and alanine 133 each bind NADP(+); that span reads GAGAMG. A substrate-binding site is contributed by asparagine 107. The active-site Proton donor is lysine 187. Substrate contacts are provided by asparagine 191, asparagine 195, asparagine 205, and serine 251. NADP(+) is bound at residue glutamate 263.

It belongs to the ketopantoate reductase family.

The protein localises to the cytoplasm. It catalyses the reaction (R)-pantoate + NADP(+) = 2-dehydropantoate + NADPH + H(+). The protein operates within cofactor biosynthesis; (R)-pantothenate biosynthesis; (R)-pantoate from 3-methyl-2-oxobutanoate: step 2/2. Catalyzes the NADPH-dependent reduction of ketopantoate into pantoic acid. The polypeptide is 2-dehydropantoate 2-reductase (Listeria monocytogenes serovar 1/2a (strain ATCC BAA-679 / EGD-e)).